We begin with the raw amino-acid sequence, 141 residues long: Hemoglobin subunit alpha (141 aa).

The region spanning 1–141 (VLSPADKTNV…VSTVLTSKYR (141 aa)) is the Globin domain. At Ser3 the chain carries Phosphoserine. N6-succinyllysine is present on Lys7. Thr8 carries the phosphothreonine modification. Position 11 is an N6-succinyllysine (Lys11). An N6-acetyllysine; alternate modification is found at Lys16. Lys16 is modified (N6-succinyllysine; alternate). Residue Tyr24 is modified to Phosphotyrosine. Ser35 carries the post-translational modification Phosphoserine. Lys40 carries the N6-succinyllysine modification. Residue Ser49 is modified to Phosphoserine. His58 contributes to the O2 binding site. A heme b-binding site is contributed by His87. Ser102 bears the Phosphoserine mark. Residue Thr108 is modified to Phosphothreonine. Residues Ser124 and Ser131 each carry the phosphoserine modification. 2 positions are modified to phosphothreonine: Thr134 and Thr137. Position 138 is a phosphoserine (Ser138).

It belongs to the globin family. As to quaternary structure, heterotetramer of two alpha chains and two beta chains. In terms of tissue distribution, red blood cells.

Its function is as follows. Involved in oxygen transport from the lung to the various peripheral tissues. Hemopressin acts as an antagonist peptide of the cannabinoid receptor CNR1. Hemopressin-binding efficiently blocks cannabinoid receptor CNR1 and subsequent signaling. The protein is Hemoglobin subunit alpha (HBA) of Taphozous georgianus (Sharp-nosed tomb bat).